Here is a 1245-residue protein sequence, read N- to C-terminus: ABC transporter B family member 13 (1245 aa).

Residues 1 to 14 show a composition bias toward polar residues; that stretch reads MDNTERSSNGNIQA. The tract at residues 1–20 is disordered; sequence MDNTERSSNGNIQAETEAKE. In terms of domain architecture, ABC transmembrane type-1 1 spans 47 to 336; it reads MLLGGLGACI…AAPSLSAIAK (290 aa). A helical transmembrane segment spans residues 48–68; sequence LLGGLGACIHGATLPLFFVFF. Asn77 carries an N-linked (GlcNAc...) asparagine glycan. The next 5 helical transmembrane spans lie at 94-114, 171-191, 195-215, 276-296, and 314-334; these read LYLV…VSCW, HVLR…LSVW, LLTL…AIVM, LGVG…LWYA, and ILNV…LSAI. N-linked (GlcNAc...) asparagine glycans are attached at residues Asn351 and Asn391. One can recognise an ABC transporter 1 domain in the interval 372-607; it reads IEFQKVSFAY…GGDYATLVNC (236 aa). Residue 406–413 participates in ATP binding; the sequence is GPSGSGKS. A compositionally biased stretch (polar residues) spans 610–629; it reads TEPQENSRSIMSETCKSQAG. A disordered region spans residues 610–660; the sequence is TEPQENSRSIMSETCKSQAGSSSSRRVSSSRRTSSFRVDQEKTKNDDSKKD. The segment covering 630-646 has biased composition (low complexity); the sequence is SSSSRRVSSSRRTSSFR. Residues 647 to 660 show a composition bias toward basic and acidic residues; the sequence is VDQEKTKNDDSKKD. An ABC transmembrane type-1 2 domain is found at 681–969; the sequence is ALLGSIGAVL…TLALTPDIVK (289 aa). 2 helical membrane-spanning segments follow: residues 686-706 and 725-745; these read IGAV…AYVL and AIIF…QHYF. The N-linked (GlcNAc...) asparagine glycan is linked to Asn778. A run of 4 helical transmembrane segments spans residues 805–822, 828–848, 913–933, and 947–967; these read IVQN…AFFY, AVVT…QLFL, LSQF…SVLI, and FMVL…TPDI. Residues 1004–1240 form the ABC transporter 2 domain; that stretch reads IEFRNVSFVY…PNGFYKQLTS (237 aa). N-linked (GlcNAc...) asparagine glycosylation is present at Asn1008. 1039–1046 contacts ATP; the sequence is GPSGSGKS. N-linked (GlcNAc...) asparagine glycosylation occurs at Asn1106.

This sequence belongs to the ABC transporter superfamily. ABCB family. Multidrug resistance exporter (TC 3.A.1.201) subfamily.

Its subcellular location is the membrane. This is ABC transporter B family member 13 (ABCB13) from Arabidopsis thaliana (Mouse-ear cress).